The sequence spans 285 residues: HTH-type transcriptional regulator MurR (285 aa).

The region spanning 1-77 is the HTH rpiR-type domain; sequence MLYLTKIRNA…MALIGEYSAS (77 aa). The H-T-H motif DNA-binding region spans 37–56; sequence SRKMAKQLGISQSSIVKFAQ. The region spanning 128–268 is the SIS domain; that stretch reads IIEVISKAPF…FVGLVQLNDV (141 aa).

As to quaternary structure, homotetramer.

It functions in the pathway amino-sugar metabolism; N-acetylmuramate degradation [regulation]. Represses the expression of the murPQ operon involved in the uptake and degradation of N-acetylmuramic acid (MurNAc). Binds to two adjacent inverted repeats within the operator region. MurNAc 6-phosphate, the substrate of MurQ, is the specific inducer that weakens binding of MurR to the operator. The chain is HTH-type transcriptional regulator MurR from Escherichia coli O7:K1 (strain IAI39 / ExPEC).